The following is a 406-amino-acid chain: MAREMRIVSVRELTGYIKERLESDPFLAHVWVRGEVSACTRHPSGHLYFFLKDEAARIRVVMFRSQVSRLGVPLENGTTVVVRGYLGVYERNGEYQLYAQGAEAEGAGKLHAALERLKEKLQREGLFDPARKRALPALPDTVGVVTSPVGAALKDILTIMRRRWPPARVLLAPVSVQGETAPYEIAQAIRALNGAGGVDVIIVGRGGGAPEELAAFNTEVVARAIFESRIPVVSAVGHEKDVTVADLVADWRAPTPSAAAEAVVPDQRAVRERLAAVESRLGRAVRHRLAVYRVRLEALRQRPVMASPGVLCRRRREVVRSLEERLGGAIGRRTGEGRSRLAVLSGRLEALSPLQVLARGYSICRRADGRIVRDADGVSPGERVIIWLHAGGLSCLVEETFPSRNP.

This sequence belongs to the XseA family. As to quaternary structure, heterooligomer composed of large and small subunits.

It localises to the cytoplasm. It catalyses the reaction Exonucleolytic cleavage in either 5'- to 3'- or 3'- to 5'-direction to yield nucleoside 5'-phosphates.. Functionally, bidirectionally degrades single-stranded DNA into large acid-insoluble oligonucleotides, which are then degraded further into small acid-soluble oligonucleotides. In Desulforudis audaxviator (strain MP104C), this protein is Exodeoxyribonuclease 7 large subunit.